The sequence spans 425 residues: tRNA(Ile)-lysidine synthase (425 aa).

Position 27–32 (S27–S32) interacts with ATP.

The protein belongs to the tRNA(Ile)-lysidine synthase family.

Its subcellular location is the cytoplasm. It catalyses the reaction cytidine(34) in tRNA(Ile2) + L-lysine + ATP = lysidine(34) in tRNA(Ile2) + AMP + diphosphate + H(+). Ligates lysine onto the cytidine present at position 34 of the AUA codon-specific tRNA(Ile) that contains the anticodon CAU, in an ATP-dependent manner. Cytidine is converted to lysidine, thus changing the amino acid specificity of the tRNA from methionine to isoleucine. In Streptococcus pneumoniae serotype 2 (strain D39 / NCTC 7466), this protein is tRNA(Ile)-lysidine synthase.